Reading from the N-terminus, the 599-residue chain is Elongation factor 4 (599 aa).

The 183-residue stretch at 2 to 184 (KHIRNFSIIA…RLVRDIPPPQ (183 aa)) folds into the tr-type G domain. GTP contacts are provided by residues 14–19 (DHGKST) and 131–134 (NKID).

The protein belongs to the TRAFAC class translation factor GTPase superfamily. Classic translation factor GTPase family. LepA subfamily.

Its subcellular location is the cell inner membrane. It catalyses the reaction GTP + H2O = GDP + phosphate + H(+). Functionally, required for accurate and efficient protein synthesis under certain stress conditions. May act as a fidelity factor of the translation reaction, by catalyzing a one-codon backward translocation of tRNAs on improperly translocated ribosomes. Back-translocation proceeds from a post-translocation (POST) complex to a pre-translocation (PRE) complex, thus giving elongation factor G a second chance to translocate the tRNAs correctly. Binds to ribosomes in a GTP-dependent manner. In Yersinia enterocolitica serotype O:8 / biotype 1B (strain NCTC 13174 / 8081), this protein is Elongation factor 4.